A 662-amino-acid chain; its full sequence is Protein transport Sec1b (662 aa).

This sequence belongs to the STXBP/unc-18/SEC1 family.

Involved in the vesicle trafficking. Binds syntaxins. This Arabidopsis thaliana (Mouse-ear cress) protein is Protein transport Sec1b (SEC1B).